A 293-amino-acid chain; its full sequence is MEIALALKAVILGIVEGLTEFLPISSTGHLILAGQLLDFNDEKGKIFEIVIQFGAILAVCWEFRARIGNVVRGLRAEPLAQRFAANVVIASVPAIVLAFIFGKWIKAHLFNPISVALAFIVGGVVILLAEWRDARRGTVSHPQGNALLEAAKAGAPRIESVDDLNWRDALKVGLAQCFALVPGTSRSGATIIGGMLFGLSRQVATEFSFFLAIPVIFGATVYELYKARALLNGDDLGIFAVGFVFAFLSAFLCVRWLLRFVATHDFKPFAWYRIAFGIVVLLTAYSGLVSWHA.

The next 8 helical transmembrane spans lie at Ile3–Pro23, Lys43–Phe63, Ala85–Ile105, Leu109–Ala129, Phe178–Gly198, Val203–Glu223, Ile238–Leu258, and Phe269–Val289.

The protein belongs to the UppP family.

It localises to the cell inner membrane. It catalyses the reaction di-trans,octa-cis-undecaprenyl diphosphate + H2O = di-trans,octa-cis-undecaprenyl phosphate + phosphate + H(+). Its function is as follows. Catalyzes the dephosphorylation of undecaprenyl diphosphate (UPP). Confers resistance to bacitracin. The sequence is that of Undecaprenyl-diphosphatase from Cupriavidus necator (strain ATCC 17699 / DSM 428 / KCTC 22496 / NCIMB 10442 / H16 / Stanier 337) (Ralstonia eutropha).